The sequence spans 318 residues: Protoheme IX farnesyltransferase (318 aa).

The next 9 helical transmembrane spans lie at 37 to 57 (LVIF…HPVI), 58 to 78 (AFTA…LNMW), 100 to 120 (VTAR…VMTM), 122 to 142 (VLVN…YLVV), 155 to 175 (IVIG…AVTG), 182 to 202 (FVLF…LALY), 228 to 248 (IMLY…LGFA), 251 to 271 (LYMG…FGIW), and 291 to 311 (ILYL…GLGG).

This sequence belongs to the UbiA prenyltransferase family. Protoheme IX farnesyltransferase subfamily.

It localises to the cell inner membrane. It carries out the reaction heme b + (2E,6E)-farnesyl diphosphate + H2O = Fe(II)-heme o + diphosphate. The protein operates within porphyrin-containing compound metabolism; heme O biosynthesis; heme O from protoheme: step 1/1. Converts heme B (protoheme IX) to heme O by substitution of the vinyl group on carbon 2 of heme B porphyrin ring with a hydroxyethyl farnesyl side group. The chain is Protoheme IX farnesyltransferase from Parvibaculum lavamentivorans (strain DS-1 / DSM 13023 / NCIMB 13966).